Reading from the N-terminus, the 358-residue chain is WAT1-related protein At3g28080 (358 aa).

The next 10 helical transmembrane spans lie at 12–32 (AVFL…STLF), 42–62 (IYPF…PSLF), 81–101 (IGLL…GIEY), 105–125 (TLAS…AVIF), 137–157 (SVAK…VIFY), 187–207 (WLIG…SFIL), 219–239 (FTVS…IGLV), 245–265 (PSIW…TGII), 283–303 (LYLA…GTIF), and 308–328 (LYLG…VVMW). Residues 27-155 (GLSTLFKVAT…LSLIGAFVVI (129 aa)) enclose the EamA domain.

This sequence belongs to the drug/metabolite transporter (DMT) superfamily. Plant drug/metabolite exporter (P-DME) (TC 2.A.7.4) family.

It is found in the membrane. This Arabidopsis thaliana (Mouse-ear cress) protein is WAT1-related protein At3g28080.